Here is a 799-residue protein sequence, read N- to C-terminus: Target of rapamycin complex 1 subunit TCO89 (799 aa).

A disordered region spans residues 18–41; sequence NASTVSHQSKPFRQFSTRSRAKSN. T52 and T82 each carry phosphothreonine. Phosphoserine is present on residues S84, S104, S107, S115, and S144. Positions 97 to 126 are enriched in polar residues; the sequence is NQGKRSASFHSPVHNTLLSPKNSSHSNTGT. 2 disordered regions span residues 97-171 and 201-284; these read NQGK…DNIE and LQSP…ADID. The span at 147–156 shows a compositional bias: basic and acidic residues; sequence DAQESKKSES. The span at 157–170 shows a compositional bias: acidic residues; the sequence is TTDEEVECFSEDNI. S203 and S215 each carry phosphoserine. The segment covering 213-224 has biased composition (basic and acidic residues); the sequence is DKSGTDGKENHR. Polar residues predominate over residues 233 to 243; that stretch reads LSSNNYFGESS. A compositionally biased stretch (basic and acidic residues) spans 244 to 253; sequence HSIEHQKDGE. A compositionally biased stretch (polar residues) spans 254-269; the sequence is TSPSSIETKLNATSVI. S290 is modified (phosphoserine). Residues 324–391 are disordered; sequence AHKSNQKPSH…PDDISSAGTK (68 aa). Positions 332-346 are enriched in basic and acidic residues; that stretch reads SHSDEQFDQEDHIDA. The segment covering 348–363 has biased composition (low complexity); sequence RSNSSRKSDSSFMSLR. A Phosphoserine modification is found at S397. Disordered regions lie at residues 418 to 476 and 538 to 568; these read FENS…QSTF and NKNSAAPASPLSNEHITSSTNSGSDANRQSN. 2 stretches are compositionally biased toward polar residues: residues 420–429 and 461–476; these read NSSSIQNSLG and GRSQLGQNIPNSQSTF. Phosphoserine is present on S575. Residues 663–685 form a disordered region; that stretch reads IRKKSHNDAQSIAHSSSDTDHKD. S707 is subject to Phosphoserine.

The protein belongs to the TORC subunit TCO89 family. The target of rapamycin complex 1 (TORC1) is composed of at least KOG1, LST8, TCO89 and either TOR1 (TORC1-A) or TOR2 (TORC1-B). Interacts with PIB2; following activation of PIB2 by glutamine or cysteine. TORC1 binds to and is inhibited by FKBP-rapamycin.

The protein localises to the cell membrane. It is found in the vacuole membrane. Functionally, component of TORC1, which regulates multiple cellular processes to control cell growth in response to environmental signals. Nutrient limitation and environmental stress signals cause inactivation of TORC1. Active TORC1 positively controls ribosome biogenesis via control of rRNA, ribosomal protein and tRNA gene expression, and rRNA processing. TORC1 positively controls protein biosynthesis by regulation of mRNA stability, translation initiation factor activity, and high-affinity amino acid permeases that serve to provide amino acids for use by the translation machinery. TORC1 also promotes growth by sequestering a number of nutrient and general stress-responsive transcription factors in the cytoplasm. TORC1 negatively controls macroautophagy, a process to recycle surplus cytoplasmic mass under nutrient starvation conditions. The sequence is that of Target of rapamycin complex 1 subunit TCO89 (TCO89) from Saccharomyces cerevisiae (strain ATCC 204508 / S288c) (Baker's yeast).